The chain runs to 94 residues: Transcription factor PRE6 (94 aa).

The segment at 1–20 (MSSRRSSRSRQSGSSRISDD) is disordered. In terms of domain architecture, bHLH spans 6–60 (SSRSRQSGSSRISDDQISDLVSKLQHLIPELRRRRSDKVSASKVLQETCNYIRNL).

The protein belongs to the bHLH protein family. Interacts with HFR1.

The protein resides in the cytoplasm. It localises to the nucleus. In terms of biological role, atypical and probable non DNA-binding bHLH transcription factor that regulates light-mediated responses in day light conditions by binding and inhibiting the activity of the bHLH transcription factor HFR1, a critical regulator of light signaling and shade avoidance. Forms non-functional heterodimers with HFR1, causing liberation and activation of PIF4 from the transcriptionally inactive HFR1-PIF4 complex. In Arabidopsis thaliana (Mouse-ear cress), this protein is Transcription factor PRE6 (PRE6).